Reading from the N-terminus, the 867-residue chain is Cilium assembly protein DZIP1 (867 aa).

The mediates interaction with PCM1 stretch occupies residues 12–203; that stretch reads MPFQKHVYYP…KANYYQCHFC (192 aa). The segment at 12–367 is mediates interaction with GLI3 and localization to the cilium basal body; sequence MPFQKHVYYP…QDFHNVMQLL (356 aa). The required for interaction with DAZ1 stretch occupies residues 154 to 278; sequence CDGEQSKKLL…SKEYEMQKTK (125 aa). The segment at 198-221 adopts a C2H2-type zinc-finger fold; the sequence is YQCHFCDKAFMNQAFLQSHIQRRH. Phosphoserine; by PLK1 is present on S226. Coiled-coil stretches lie at residues 230–340, 401–445, and 568–588; these read YQKN…KSNI, TSMI…FTCN, and DQLH…EREI. The interval 446 to 617 is mediates interaction with GDI2 and RAB8A; sequence PLNSISEPKG…EKALLSSDQC (172 aa). 3 stretches are compositionally biased toward polar residues: residues 643 to 654, 671 to 680, and 708 to 718; these read LIRQKAVSTDRT, KSSTITTPPF, and NKGSFGKNTVK. Disordered regions lie at residues 643–768 and 796–867; these read LIRQ…GGTN and SLEE…TSDV. Residues 722 to 733 are compositionally biased toward acidic residues; the sequence is DGTEGSEIEDTD. The span at 807-823 shows a compositional bias: basic and acidic residues; the sequence is SGKEQKEPPPAKNEPHF. Residues 848 to 859 are compositionally biased toward low complexity; the sequence is SSTLKSSLVTVT.

Belongs to the DZIP C2H2-type zinc-finger protein family. As to quaternary structure, interacts with DAZ1. Interacts with the BBSome; recruits the BBSome to centriolar satellites of the cilium. Interacts with PCM1; localizes DZIP1 and the associated BBSome to centriolar satellites. Interacts with RAB8A (GDP-bound inactive form); recruits RAB8A to the basal body of the cilium and prevents its inhibition by GDI2. Interacts with GDI2; negatively regulates the interaction of GDI2 with GDP-bound RAB8A. Interacts with GLI3; retains GLI3 within the cytoplasm. Interacts with CEP164. Interacts with IFT88. Post-translationally, phosphorylation at Ser-226 by PLK1 before mitosis prevents interaction with PCM1 and localization to centriolar satellites. Thereby, it negatively regulates the localization of the BBSome to centriolar satellites. Predominantly expressed in testis (at protein level). Also expressed in fetal brain, adult oocytes and ovary. Expressed in undifferentiated ES cells. In testis, it is specifically expressed in germ cells (at protein level). Expressed in mature germ cells and secondary spermatocytes, while it is weakly or not expressed in primary spermatocytes.

The protein resides in the cytoplasm. The protein localises to the cytoskeleton. It is found in the cilium basal body. It localises to the microtubule organizing center. Its subcellular location is the centrosome. The protein resides in the centriolar satellite. The protein localises to the centriole. It is found in the nucleus. It localises to the nucleus speckle. In terms of biological role, molecular adapter that recruits protein complexes required for cilium assembly and function to the cilium basal body. At the exit of mitosis, localizes to the basal body and ciliary base of the forming primary cilium where it recruits and activates RAB8A to direct vesicle-mediated transport of proteins to the cilium. Also recruits the BBSome, a complex involved in cilium biogenesis, by bridging it to PCM1 at the centriolar satellites of the cilium. It is also required for the recruitment to the cilium basal body of the intraflagellar transport (IFT) machinery as well as the ciliary appendage proteins CEP164 and NINEIN. Functions as a regulator of Hedgehog signaling both through its role in cilium assembly but also probably through its ability to retain GLI3 within the cytoplasm. It is involved in spermatogenesis through its role in organization of the basal body and assembly of the sperm flagellum. Also indirectly involved in heart development through its function in ciliogenesis. This is Cilium assembly protein DZIP1 from Homo sapiens (Human).